The chain runs to 239 residues: Venom nerve growth factor (239 aa).

An N-terminal signal peptide occupies residues Met1–Ala18. Positions Ala19 to Arg125 are excised as a propeptide. Residues Gly47–Asp66 show a composition bias toward basic and acidic residues. The tract at residues Gly47–Glu68 is disordered. Disulfide bonds link Cys139–Cys203, Cys181–Cys231, and Cys191–Cys233.

This sequence belongs to the NGF-beta family. In terms of assembly, homodimer; non-covalently linked. As to expression, expressed by the venom gland.

It is found in the secreted. Functionally, nerve growth factor is important for the development and maintenance of the sympathetic and sensory nervous systems. It stimulates division and differentiation of sympathetic and embryonic sensory neurons as well as basal forebrain cholinergic neurons in the brain. Its relevance in the snake venom is not clear. However, it has been shown to inhibit metalloproteinase-dependent proteolysis of platelet glycoprotein Ib alpha, suggesting a metalloproteinase inhibition to prevent metalloprotease autodigestion and/or protection against prey proteases. Binds a lipid between the two protein chains in the homodimer. The lipid-bound form promotes histamine relase from mouse mast cells, contrary to the lipid-free form. The sequence is that of Venom nerve growth factor from Pseudechis porphyriacus (Red-bellied black snake).